The sequence spans 228 residues: Cytochrome c oxidase subunit 2 (228 aa).

At 1–26 the chain is on the mitochondrial intermembrane side; sequence MATWANLGLQNSSSPLMEQLNFFHDH. The helical transmembrane segment at 27-48 threads the bilayer; sequence TVLILIMITVMITYVMGMLFFN. Topologically, residues 49–62 are mitochondrial matrix; the sequence is KFTNRYLLHGQTIE. Residues 63–82 traverse the membrane as a helical segment; that stretch reads IIWTILPAIILMFIAFPSLR. Topologically, residues 83–228 are mitochondrial intermembrane; the sequence is LLYLLDEINS…FIKWVSSQLN (146 aa). Residues His-161, Cys-196, Glu-198, Cys-200, His-204, and Met-207 each contribute to the Cu cation site. Glu-198 contacts Mg(2+).

It belongs to the cytochrome c oxidase subunit 2 family. Component of the cytochrome c oxidase (complex IV, CIV), a multisubunit enzyme composed of a catalytic core of 3 subunits and several supernumerary subunits. The complex exists as a monomer or a dimer and forms supercomplexes (SCs) in the inner mitochondrial membrane with ubiquinol-cytochrome c oxidoreductase (cytochrome b-c1 complex, complex III, CIII). Requires Cu cation as cofactor.

The protein localises to the mitochondrion inner membrane. The catalysed reaction is 4 Fe(II)-[cytochrome c] + O2 + 8 H(+)(in) = 4 Fe(III)-[cytochrome c] + 2 H2O + 4 H(+)(out). Functionally, component of the cytochrome c oxidase, the last enzyme in the mitochondrial electron transport chain which drives oxidative phosphorylation. The respiratory chain contains 3 multisubunit complexes succinate dehydrogenase (complex II, CII), ubiquinol-cytochrome c oxidoreductase (cytochrome b-c1 complex, complex III, CIII) and cytochrome c oxidase (complex IV, CIV), that cooperate to transfer electrons derived from NADH and succinate to molecular oxygen, creating an electrochemical gradient over the inner membrane that drives transmembrane transport and the ATP synthase. Cytochrome c oxidase is the component of the respiratory chain that catalyzes the reduction of oxygen to water. Electrons originating from reduced cytochrome c in the intermembrane space (IMS) are transferred via the dinuclear copper A center (CU(A)) of subunit 2 and heme A of subunit 1 to the active site in subunit 1, a binuclear center (BNC) formed by heme A3 and copper B (CU(B)). The BNC reduces molecular oxygen to 2 water molecules using 4 electrons from cytochrome c in the IMS and 4 protons from the mitochondrial matrix. The chain is Cytochrome c oxidase subunit 2 (COII) from Culex quinquefasciatus (Southern house mosquito).